We begin with the raw amino-acid sequence, 282 residues long: Peptidoglycan-recognition protein LD (282 aa).

The disordered stretch occupies residues 1–29; sequence MDSSHIAVRVARRSPSPAAVSQSSYGSLG. At 1–88 the chain is on the cytoplasmic side; the sequence is MDSSHIAVRV…RRNPTLHEDC (88 aa). A helical membrane pass occupies residues 89-111; the sequence is FNWRSVGLLVMCASALALAAYLL. At 112–282 the chain is on the extracellular side; that stretch reads WRQTQTPDFG…PHYASHQTSK (171 aa). Cysteines 162 and 166 form a disulfide. N-linked (GlcNAc...) asparagine glycosylation occurs at asparagine 222.

It belongs to the N-acetylmuramoyl-L-alanine amidase 2 family. In terms of tissue distribution, expressed in uninduced hemocytes and mbn-2 cells.

It is found in the cell membrane. Its function is as follows. Peptidoglycan-recognition protein probably involved in innate immunity by binding to peptidoglycans (PGN) of bacteria and activating the immune response. This Drosophila melanogaster (Fruit fly) protein is Peptidoglycan-recognition protein LD (PGRP-LD).